Consider the following 103-residue polypeptide: Putative membrane protein insertion efficiency factor (103 aa).

It belongs to the UPF0161 family.

The protein localises to the cell inner membrane. Its function is as follows. Could be involved in insertion of integral membrane proteins into the membrane. The chain is Putative membrane protein insertion efficiency factor from Chlamydia abortus (strain DSM 27085 / S26/3) (Chlamydophila abortus).